We begin with the raw amino-acid sequence, 415 residues long: Arginine biosynthesis bifunctional protein ArgJ (415 aa).

6 residues coordinate substrate: Thr-156, Lys-182, Thr-193, Glu-279, Asn-410, and Thr-415. Residue Thr-193 is the Nucleophile of the active site.

This sequence belongs to the ArgJ family. As to quaternary structure, heterotetramer of two alpha and two beta chains.

It is found in the cytoplasm. The enzyme catalyses N(2)-acetyl-L-ornithine + L-glutamate = N-acetyl-L-glutamate + L-ornithine. The catalysed reaction is L-glutamate + acetyl-CoA = N-acetyl-L-glutamate + CoA + H(+). Its pathway is amino-acid biosynthesis; L-arginine biosynthesis; L-ornithine and N-acetyl-L-glutamate from L-glutamate and N(2)-acetyl-L-ornithine (cyclic): step 1/1. It participates in amino-acid biosynthesis; L-arginine biosynthesis; N(2)-acetyl-L-ornithine from L-glutamate: step 1/4. Its function is as follows. Catalyzes two activities which are involved in the cyclic version of arginine biosynthesis: the synthesis of N-acetylglutamate from glutamate and acetyl-CoA as the acetyl donor, and of ornithine by transacetylation between N(2)-acetylornithine and glutamate. The sequence is that of Arginine biosynthesis bifunctional protein ArgJ from Synechococcus sp. (strain ATCC 27144 / PCC 6301 / SAUG 1402/1) (Anacystis nidulans).